Consider the following 101-residue polypeptide: Small ribosomal subunit protein bS18c (101 aa).

The protein belongs to the bacterial ribosomal protein bS18 family. In terms of assembly, part of the 30S ribosomal subunit.

The protein resides in the plastid. The protein localises to the chloroplast. The protein is Small ribosomal subunit protein bS18c of Oenothera biennis (German evening primrose).